The chain runs to 272 residues: Octanoyltransferase (272 aa).

Polar residues predominate over residues 1 to 12 (MQQDPPTSQPHT). A disordered region spans residues 1–20 (MQQDPPTSQPHTPQIVDGVK). Residues 65-255 (HQRPNTVIYV…EMMSFQPYEM (191 aa)) enclose the BPL/LPL catalytic domain. Substrate-binding positions include 103–110 (RGGEITWH), 175–177 (AIG), and 188–190 (GFA). Cysteine 206 functions as the Acyl-thioester intermediate in the catalytic mechanism.

Belongs to the LipB family.

Its subcellular location is the cytoplasm. The catalysed reaction is octanoyl-[ACP] + L-lysyl-[protein] = N(6)-octanoyl-L-lysyl-[protein] + holo-[ACP] + H(+). The protein operates within protein modification; protein lipoylation via endogenous pathway; protein N(6)-(lipoyl)lysine from octanoyl-[acyl-carrier-protein]: step 1/2. Functionally, catalyzes the transfer of endogenously produced octanoic acid from octanoyl-acyl-carrier-protein onto the lipoyl domains of lipoate-dependent enzymes. Lipoyl-ACP can also act as a substrate although octanoyl-ACP is likely to be the physiological substrate. The chain is Octanoyltransferase from Cutibacterium acnes (strain DSM 16379 / KPA171202) (Propionibacterium acnes).